The sequence spans 634 residues: Hyphal wall protein 1 (634 aa).

Residues 1 to 27 (MRLSTAQLIAIAYYMLSIGATVPQVDG) form the signal peptide. Disordered stretches follow at residues 40 to 307 (SYDY…TTTT) and 412 to 570 (CPLT…SGAI). Low complexity predominate over residues 42-114 (DYYQEPCDDY…DYPQQPQEPC (73 aa)). Residues 46–58 (EPCDDYPQQQQQQ) form a 1; approximate repeat. A 14 X 10 AA tandem repeats of [EVIQ]-P-[CDT]-D-[YNW]-P-[PQ]-[QI]-[QP]-[QDN] region spans residues 46 to 187 (EPCDDYPQQQ…PNIPTDWIPD (142 aa)). The stretch at 59–69 (EPCDYPQQQQQ) is one 2; approximate repeat. A 3; approximate repeat occupies 70–81 (EEPCDYPQQQPQ). 9 tandem repeats follow at residues 82–91 (EPCDYPQQPQ), 92–101 (EPCDYPQQPQ), 102–111 (EPCDYPQQPQ), 112–121 (EPCDNPPQPD), 122–131 (VPCDNPPQPD), 132–141 (VPCDNPPQPD), 142–151 (VPCDNPPQPD), 152–161 (VPCDNPPQPD), and 162–171 (QPDDNPPIPN). A compositionally biased stretch (pro residues) spans 115–171 (DNPPQPDVPCDNPPQPDVPCDNPPQPDVPCDNPPQPDVPCDNPPQPDQPDDNPPIPN). The 13; truncated repeat unit spans residues 172–179 (IPTDWIPN). 2 stretches are compositionally biased toward low complexity: residues 172–183 (IPTDWIPNIPTD) and 193–307 (TTPA…TTTT). Residues 180 to 187 (IPTDWIPD) form a 14; truncated repeat. N-linked (GlcNAc...) asparagine glycosylation is found at Asn241 and Asn286. The segment covering 415 to 426 (TENTPGTDSTPE) has biased composition (polar residues). Residues 508–550 (ETKPAAPKSSAPATEPSPVAPGTESAPAGPGASSSPKSSVLAS) are compositionally biased toward low complexity. A glycan (N-linked (GlcNAc...) asparagine) is linked at Asn601. The GPI-anchor amidated glycine moiety is linked to residue Gly613. The propeptide at 614 to 634 (AGNNMRLTFGAAIIGIAAFLI) is removed in mature form.

This sequence belongs to the HWP1 family. In terms of processing, the GPI-anchor is attached to the protein in the endoplasmic reticulum and serves to target the protein to the cell surface. There, the glucosamine-inositol phospholipid moiety is cleaved off and the GPI-modified mannoprotein is covalently attached via its lipidless GPI glycan remnant to the 1,6-beta-glucan of the outer cell wall layer. Serves as a substrate for mammalian transglutaminases which are necessary for cross-linking between HWP1 and host epithelial cells. Also predicted to be a substrate for cleavage by KEX2. Post-translationally, N- and O-glycosylated.

The protein resides in the secreted. It is found in the cell wall. It localises to the membrane. Major hyphal cell wall protein which plays a role of adhesin and is required for mating, normal hyphal development, cell-to-cell adhesive functions necessary for biofilm integrity, attachment to host, and virulence. Promotes interactions with host and bacterial molecules, thus leading to effective colonization within polymicrobial communities. Plays a crucial role in gastrointestinal colonization, in mucosal symptomatic and asymptomatic infections, in vaginitis, as well as in lethal oroesophageal candidiasis, caused by the combined action of fungal virulence factors and host inflammatory responses when protective immunity is absent. The sequence is that of Hyphal wall protein 1 (HWP1) from Candida albicans (strain SC5314 / ATCC MYA-2876) (Yeast).